Here is a 427-residue protein sequence, read N- to C-terminus: Glutamate-1-semialdehyde 2,1-aminomutase (427 aa).

Lysine 266 is modified (N6-(pyridoxal phosphate)lysine).

The protein belongs to the class-III pyridoxal-phosphate-dependent aminotransferase family. HemL subfamily. In terms of assembly, homodimer. The cofactor is pyridoxal 5'-phosphate.

It localises to the cytoplasm. The enzyme catalyses (S)-4-amino-5-oxopentanoate = 5-aminolevulinate. Its pathway is porphyrin-containing compound metabolism; protoporphyrin-IX biosynthesis; 5-aminolevulinate from L-glutamyl-tRNA(Glu): step 2/2. The polypeptide is Glutamate-1-semialdehyde 2,1-aminomutase (Dechloromonas aromatica (strain RCB)).